A 207-amino-acid polypeptide reads, in one-letter code: MDKEKGLLIVLSGPSGVGKGTVRKKIFEDPTTSYKYSISMTTRHMREGEIDGVDYFFKTKEEFEALIKDDQFIEYAQYVGNYYGTPVQYVKDTMEEGHDVFLEIEVEGAKQVRKKFPDALFIFLAPPSLDDLKERLVGRGTESDEKIQSRVNEARKEVEMMNLYDYVVVNDEVELAKNRIQSIVEAEHLKRERIEAKYRKMLLEVKK.

Residues glycine 6 to glutamate 185 form the Guanylate kinase-like domain. Glycine 13–glycine 20 provides a ligand contact to ATP.

Belongs to the guanylate kinase family.

The protein resides in the cytoplasm. The enzyme catalyses GMP + ATP = GDP + ADP. In terms of biological role, essential for recycling GMP and indirectly, cGMP. This Staphylococcus epidermidis (strain ATCC 12228 / FDA PCI 1200) protein is Guanylate kinase.